We begin with the raw amino-acid sequence, 294 residues long: Acetylglutamate kinase (294 aa).

Substrate contacts are provided by residues 63 to 64, Arg85, and Asn188; that span reads GG.

The protein belongs to the acetylglutamate kinase family. ArgB subfamily.

Its subcellular location is the cytoplasm. It carries out the reaction N-acetyl-L-glutamate + ATP = N-acetyl-L-glutamyl 5-phosphate + ADP. The protein operates within amino-acid biosynthesis; L-arginine biosynthesis; N(2)-acetyl-L-ornithine from L-glutamate: step 2/4. In terms of biological role, catalyzes the ATP-dependent phosphorylation of N-acetyl-L-glutamate. In Methanococcus maripaludis (strain C7 / ATCC BAA-1331), this protein is Acetylglutamate kinase.